We begin with the raw amino-acid sequence, 730 residues long: 1,4-alpha-glucan branching enzyme GlgB (730 aa).

The active-site Nucleophile is Asp-405. Glu-458 acts as the Proton donor in catalysis.

It belongs to the glycosyl hydrolase 13 family. GlgB subfamily. In terms of assembly, monomer.

It catalyses the reaction Transfers a segment of a (1-&gt;4)-alpha-D-glucan chain to a primary hydroxy group in a similar glucan chain.. It functions in the pathway glycan biosynthesis; glycogen biosynthesis. Catalyzes the formation of the alpha-1,6-glucosidic linkages in glycogen by scission of a 1,4-alpha-linked oligosaccharide from growing alpha-1,4-glucan chains and the subsequent attachment of the oligosaccharide to the alpha-1,6 position. The chain is 1,4-alpha-glucan branching enzyme GlgB from Haemophilus influenzae (strain PittGG).